An 81-amino-acid polypeptide reads, in one-letter code: Short neurotoxin 1 (81 aa).

A signal peptide spans Met1–Thr21. Disulfide bonds link Cys24–Cys43, Cys38–Cys60, Cys62–Cys73, and Cys74–Cys79.

The protein belongs to the three-finger toxin family. Short-chain subfamily. Type I alpha-neurotoxin sub-subfamily. Expressed by the venom gland.

It is found in the secreted. Binds to muscle nicotinic acetylcholine receptor (nAChR) and inhibit acetylcholine from binding to the receptor, thereby impairing neuromuscular transmission. The sequence is that of Short neurotoxin 1 from Austrelaps superbus (Lowland copperhead snake).